A 279-amino-acid chain; its full sequence is Probable ribosomal RNA small subunit methyltransferase A (279 aa).

Asparagine 23, leucine 25, glycine 50, glutamate 71, aspartate 95, and asparagine 110 together coordinate S-adenosyl-L-methionine.

This sequence belongs to the class I-like SAM-binding methyltransferase superfamily. rRNA adenine N(6)-methyltransferase family. RsmA subfamily.

Its subcellular location is the cytoplasm. Functionally, specifically dimethylates two adjacent adenosines in the loop of a conserved hairpin near the 3'-end of 16S rRNA in the 30S particle. May play a critical role in biogenesis of 30S subunits. The sequence is that of Probable ribosomal RNA small subunit methyltransferase A from Thermococcus kodakarensis (strain ATCC BAA-918 / JCM 12380 / KOD1) (Pyrococcus kodakaraensis (strain KOD1)).